The sequence spans 253 residues: uncharacterized protein (253 aa).

Residues 1–25 (MRKKKFLSKVSFGSLFLLCGTVLSA) form the signal peptide. Cysteine 26 is lipidated: N-palmitoyl cysteine. Residue cysteine 26 is the site of S-diacylglycerol cysteine attachment.

It belongs to the MG439/MG440 family.

The protein localises to the cell membrane. This is an uncharacterized protein from Mycoplasma pneumoniae (strain ATCC 29342 / M129 / Subtype 1) (Mycoplasmoides pneumoniae).